A 303-amino-acid polypeptide reads, in one-letter code: Small ribosomal subunit protein uS2 (303 aa).

Residues 267–303 form a disordered region; sequence AESLSMAEEPAPPSQRKGPASETAEPVAEPAVTESGS.

It belongs to the universal ribosomal protein uS2 family.

This chain is Small ribosomal subunit protein uS2, found in Solibacter usitatus (strain Ellin6076).